The following is a 489-amino-acid chain: Squalene monooxygenase (489 aa).

Residues 10–30 form a helical membrane-spanning segment; it reads VTYDALIVGAGVIGPCVATAL. Residues 21 to 22, 41 to 42, Arg-49, Arg-151, Val-167, Asp-328, and Met-341 each bind FAD; these read VI and ER. 2 helical membrane passes run 426 to 446 and 464 to 484; these read FLAG…AVAF and ALLE…PFLV.

This sequence belongs to the squalene monooxygenase family. The cofactor is FAD.

The protein localises to the microsome membrane. It localises to the endoplasmic reticulum membrane. It carries out the reaction squalene + reduced [NADPH--hemoprotein reductase] + O2 = (S)-2,3-epoxysqualene + oxidized [NADPH--hemoprotein reductase] + H2O + H(+). The protein operates within terpene metabolism; lanosterol biosynthesis; lanosterol from farnesyl diphosphate: step 2/3. Catalyzes the stereospecific oxidation of squalene to (S)-2,3-epoxysqualene, and is considered to be a rate-limiting enzyme in steroid biosynthesis. The chain is Squalene monooxygenase (ERG1) from Candida glabrata (strain ATCC 2001 / BCRC 20586 / JCM 3761 / NBRC 0622 / NRRL Y-65 / CBS 138) (Yeast).